The chain runs to 426 residues: Pyrophosphate--fructose 6-phosphate 1-phosphotransferase 2 (426 aa).

Glycine 15 contacts diphosphate. Aspartate 114 lines the Mg(2+) pocket. Substrate contacts are provided by residues 140–142, 186–188, glutamate 247, and 308–311; these read TID, MGR, and YELR. The active-site Proton acceptor is aspartate 142.

The protein belongs to the phosphofructokinase type A (PFKA) family. PPi-dependent PFK group II subfamily. Clade 'Short' sub-subfamily. Homotetramer. It depends on Mg(2+) as a cofactor.

The protein resides in the cytoplasm. The catalysed reaction is beta-D-fructose 6-phosphate + diphosphate = beta-D-fructose 1,6-bisphosphate + phosphate + H(+). Its pathway is carbohydrate degradation; glycolysis; D-glyceraldehyde 3-phosphate and glycerone phosphate from D-glucose: step 3/4. With respect to regulation, non-allosteric. Catalyzes the phosphorylation of D-fructose 6-phosphate, the first committing step of glycolysis. Uses inorganic phosphate (PPi) as phosphoryl donor instead of ATP like common ATP-dependent phosphofructokinases (ATP-PFKs), which renders the reaction reversible, and can thus function both in glycolysis and gluconeogenesis. Consistently, PPi-PFK can replace the enzymes of both the forward (ATP-PFK) and reverse (fructose-bisphosphatase (FBPase)) reactions. The polypeptide is Pyrophosphate--fructose 6-phosphate 1-phosphotransferase 2 (pfk2) (Trichomonas vaginalis (strain ATCC PRA-98 / G3)).